Consider the following 810-residue polypeptide: Zinc finger transcription factor YRR1 (810 aa).

The disordered stretch occupies residues 1–47 (MKRRSDALLGSFQATNVTPPSDNSNSTAGGANGSNSGTPTSTSGKKR). The segment covering 12–22 (FQATNVTPPSD) has biased composition (polar residues). Residues 23 to 43 (NSNSTAGGANGSNSGTPTSTS) are compositionally biased toward low complexity. The segment at residues 54-82 (CGFCRRRKLRCDQQKPMCSTCISRNLTTC) is a DNA-binding region (zn(2)-C6 fungal-type). The tract at residues 722-742 (ELDPQSDNPSSEAKIVSDRQR) is disordered.

It localises to the cytoplasm. The protein localises to the nucleus. Functionally, transcription factor involved in the regulation of multidrug resistance genes. Acts in concert with YRR1. This chain is Zinc finger transcription factor YRR1 (YRR1), found in Saccharomyces cerevisiae (strain ATCC 204508 / S288c) (Baker's yeast).